Here is a 607-residue protein sequence, read N- to C-terminus: MASTHAAGSPAPSSSINSPILHPVNASVSNASLGEGSIRFSPAPPSTFSNQGDGVRSKRNKRDSRKKREAKGLDQESAPPKKKSVAVLNTAIPSSDLGILRPIAVGEPRHSDLFPPQPRQLNFAVRKMSGVIGQSWDFYEVVDKLTNKNGFRYSYAIADTDFPHIKYRQTDVPPYHARFSFEDSPAAILFSKDALAVTTNEPWHTARANVCAREGTYYYEARIISGIMSSSEATTSNGSNALPSRGHVRLGFARREADLDVNVGVDCYGYGIRDVNGEVVNRMRCEYFFPKGESIREGDVIGMLITLPPLSLHRKIVEGTYDPACDNFKPGPASATNIIRDRIPFHYKNDFCWQQSNVFPTKQLRDYAFNLKETPAFGPPSPLNAEDPSLRTLPGSSITIYKNGIKMGTPFKELYAFLPPASRLANGTNNLGLGERENADDGMIGYYPAVSCYGGGAVECRFQGPWWFSPPSATENGEPVKGIGERFDEQIVEDVLADIVDEVEAMLVWGSVDGNVVNNAEMDAPGVGAVGGTDVLKGGVGAAYDPATTLSTAPAESNGSGTASIKLADEDACHTGFEDTMSLGVANTPITDVPVPPEPEDTPMTGG.

Positions 1–19 (MASTHAAGSPAPSSSINSP) are enriched in low complexity. Disordered stretches follow at residues 1-22 (MAST…PILH) and 34-86 (GEGS…KSVA). The segment covering 57-69 (SKRNKRDSRKKRE) has biased composition (basic residues). Residues 157-376 (IADTDFPHIK…YAFNLKETPA (220 aa)) enclose the B30.2/SPRY domain. The disordered stretch occupies residues 587–607 (NTPITDVPVPPEPEDTPMTGG).

Belongs to the cclA family. As to quaternary structure, component of the COMPASS complex.

It localises to the nucleus. The protein resides in the chromosome. Its subcellular location is the telomere. In terms of biological role, component of the COMPASS (Set1C) complex that specifically mono-, di- and trimethylates histone H3 to form H3K4me1/2/3, which subsequently plays a role in telomere length maintenance and transcription elongation regulation. Controls the production of several secondary metabolites, including monodictyphenone, emodin and emodin derivatives, as well as two anti-osteoporosis polyketides, F9775A and F9775B. In Emericella nidulans (strain FGSC A4 / ATCC 38163 / CBS 112.46 / NRRL 194 / M139) (Aspergillus nidulans), this protein is COMPASS component cclA.